A 1987-amino-acid polypeptide reads, in one-letter code: Transcription factor 20 (1987 aa).

The segment covering Met-1–His-22 has biased composition (polar residues). Disordered stretches follow at residues Met-1–Gln-79, Asp-96–Pro-432, Leu-446–Leu-481, Leu-502–Arg-816, and Pro-844–Glu-891. Positions Thr-51–Gly-74 are enriched in low complexity. At Arg-59 the chain carries Omega-N-methylarginine. The span at Gln-121–His-142 shows a compositional bias: polar residues. The segment covering Ser-163 to Gln-205 has biased composition (low complexity). A compositionally biased stretch (polar residues) spans Pro-206–Gly-235. Residues Gln-248–Ser-277 show a composition bias toward low complexity. Positions Val-289–Asn-311 are enriched in polar residues. Residue Lys-316 forms a Glycyl lysine isopeptide (Lys-Gly) (interchain with G-Cter in SUMO2) linkage. Residues Gln-322 to Gln-354 show a composition bias toward low complexity. A compositionally biased stretch (polar residues) spans Met-357 to Gln-377. Over residues Ser-396–Pro-416 the composition is skewed to low complexity. A compositionally biased stretch (polar residues) spans Leu-417–Pro-432. Positions Leu-446–Pro-456 are enriched in low complexity. Phosphoserine is present on residues Ser-447 and Ser-458. Composition is skewed to polar residues over residues Ser-526–Glu-537, Leu-566–Thr-576, and Ala-585–Ala-605. Residues Ser-567, Ser-588, Ser-603, and Ser-612 each carry the phosphoserine modification. The span at Thr-618 to Lys-627 shows a compositional bias: polar residues. Position 631 is an N6-acetyllysine (Lys-631). The segment covering Arg-645 to Gln-657 has biased composition (basic and acidic residues). Positions Arg-666 to Pro-682 are enriched in polar residues. Phosphoserine is present on Ser-669. Over residues Gly-693–Ser-715 the composition is skewed to low complexity. Over residues Thr-722–Pro-731 the composition is skewed to polar residues. Residues Lys-739, Lys-762, Lys-777, Lys-852, Lys-861, and Lys-873 each participate in a glycyl lysine isopeptide (Lys-Gly) (interchain with G-Cter in SUMO2) cross-link. Residues Glu-761–Lys-777 are compositionally biased toward basic and acidic residues. At Ser-900 the chain carries Phosphoserine. Glycyl lysine isopeptide (Lys-Gly) (interchain with G-Cter in SUMO2) cross-links involve residues Lys-949 and Lys-951. The disordered stretch occupies residues Lys-949–Met-1065. Lys-958 is covalently cross-linked (Glycyl lysine isopeptide (Lys-Gly) (interchain with G-Cter in SUMO1); alternate). Residue Lys-958 forms a Glycyl lysine isopeptide (Lys-Gly) (interchain with G-Cter in SUMO2); alternate linkage. Basic and acidic residues predominate over residues Lys-974–Tyr-989. Lys-985 is covalently cross-linked (Glycyl lysine isopeptide (Lys-Gly) (interchain with G-Cter in SUMO2)). Residues Ser-994 and Ser-1033 each carry the phosphoserine modification. Lys-1043 is covalently cross-linked (Glycyl lysine isopeptide (Lys-Gly) (interchain with G-Cter in SUMO2)). Arg-1052 is modified (omega-N-methylarginine). At Ser-1081 the chain carries Phosphoserine. Glycyl lysine isopeptide (Lys-Gly) (interchain with G-Cter in SUMO2) cross-links involve residues Lys-1114, Lys-1126, Lys-1165, Lys-1201, Lys-1206, Lys-1211, Lys-1238, Lys-1259, Lys-1295, and Lys-1302. Positions Val-1136–Pro-1372 are disordered. Residues Asp-1158–Gly-1170 show a composition bias toward basic and acidic residues. A leucine-zipper region spans residues Leu-1198 to Leu-1219. Positions Arg-1282–Lys-1295 match the Nuclear localization signal motif. 2 stretches are compositionally biased toward basic and acidic residues: residues Asn-1305–Asp-1321 and His-1332–Lys-1346. Position 1333 is a phosphoserine (Ser-1333). A Glycyl lysine isopeptide (Lys-Gly) (interchain with G-Cter in SUMO2) cross-link involves residue Lys-1337. The residue at position 1363 (Ser-1363) is a Phosphoserine. Lys-1366 is covalently cross-linked (Glycyl lysine isopeptide (Lys-Gly) (interchain with G-Cter in SUMO2)). A Phosphoserine modification is found at Ser-1389. The interval Ser-1415–Glu-1434 is disordered. Glycyl lysine isopeptide (Lys-Gly) (interchain with G-Cter in SUMO2) cross-links involve residues Lys-1417, Lys-1437, Lys-1456, and Lys-1474. Positions Ser-1446–Gln-1636 are disordered. A compositionally biased stretch (basic and acidic residues) spans Glu-1463–Val-1479. Residues Thr-1481–Gly-1501 are compositionally biased toward polar residues. Residue Lys-1538 forms a Glycyl lysine isopeptide (Lys-Gly) (interchain with G-Cter in SUMO2) linkage. Ser-1550 carries the post-translational modification Phosphoserine. Lys-1552 is covalently cross-linked (Glycyl lysine isopeptide (Lys-Gly) (interchain with G-Cter in SUMO2)). Residues Gly-1565–Lys-1579 constitute a DNA-binding region (a.T hook). Pro residues predominate over residues Gln-1584–Met-1594. Positions Lys-1604–Gln-1628 match the Nuclear localization signal motif. Residues Lys-1606 to Lys-1627 show a composition bias toward basic residues. Lys-1641 participates in a covalent cross-link: Glycyl lysine isopeptide (Lys-Gly) (interchain with G-Cter in SUMO2). Disordered stretches follow at residues Gln-1685 to Leu-1710 and Thr-1760 to Leu-1865. A Phosphoserine modification is found at Ser-1697. Phosphothreonine is present on residues Thr-1699, Thr-1790, and Thr-1792. A Nuclear localization signal motif is present at residues Arg-1812 to Ser-1819. Residues Asp-1850 to Ser-1859 show a composition bias toward polar residues. A C2HC pre-PHD-type; degenerate zinc finger spans residues Pro-1856 to Ile-1892. The segment at Met-1912–Lys-1960 adopts a PHD-type zinc-finger fold. Positions Pro-1966–Gly-1987 are disordered. The segment covering Gln-1971 to Gly-1987 has biased composition (polar residues).

In terms of assembly, homodimer. Interacts with RNF4 and JUN. Binds to the regulatory region of MMP3. In terms of tissue distribution, expressed in brain, lung, liver, kidney and testes.

The protein resides in the nucleus. Its function is as follows. Transcriptional activator that binds to the regulatory region of MMP3 and thereby controls stromelysin expression. It stimulates the activity of various transcriptional activators such as JUN, SP1, PAX6 and ETS1, suggesting a function as a coactivator. In Mus musculus (Mouse), this protein is Transcription factor 20 (Tcf20).